We begin with the raw amino-acid sequence, 474 residues long: Pyruvate kinase (474 aa).

Arg33 serves as a coordination point for substrate. Residues Asn35, Ser37, and Asp67 each coordinate K(+). An ATP-binding site is contributed by 35–38; it reads NFSH. 2 residues coordinate ATP: Arg74 and Lys155. Residue Glu220 participates in Mg(2+) binding. Positions 243, 244, and 276 each coordinate substrate. Asp244 lines the Mg(2+) pocket.

It belongs to the pyruvate kinase family. As to quaternary structure, homotetramer. Mg(2+) is required as a cofactor. Requires K(+) as cofactor.

It catalyses the reaction pyruvate + ATP = phosphoenolpyruvate + ADP + H(+). It participates in carbohydrate degradation; glycolysis; pyruvate from D-glyceraldehyde 3-phosphate: step 5/5. This is Pyruvate kinase (pyk) from Corynebacterium efficiens (strain DSM 44549 / YS-314 / AJ 12310 / JCM 11189 / NBRC 100395).